The primary structure comprises 202 residues: Tetranectin (202 aa).

Residues 1 to 21 (MELWGAYLLLCLFSLLTQVTT) form the signal peptide. Thr-25 carries an O-linked (GalNAc...) threonine glycan. 3 disulfide bridges follow: Cys-71–Cys-81, Cys-98–Cys-197, and Cys-173–Cys-189. One can recognise a C-type lectin domain in the interval 77–198 (VHMKCFLAFT…CRDQLPYICQ (122 aa)).

As to quaternary structure, homotrimer. In terms of tissue distribution, found in plasma.

It localises to the secreted. Its function is as follows. Tetranectin binds to plasminogen and to isolated kringle 4. May be involved in the packaging of molecules destined for exocytosis. Plays a role in retinal function. The polypeptide is Tetranectin (CLEC3B) (Homo sapiens (Human)).